Reading from the N-terminus, the 459-residue chain is Argininosuccinate lyase (459 aa).

It belongs to the lyase 1 family. Argininosuccinate lyase subfamily.

It localises to the cytoplasm. The catalysed reaction is 2-(N(omega)-L-arginino)succinate = fumarate + L-arginine. The protein operates within amino-acid biosynthesis; L-arginine biosynthesis; L-arginine from L-ornithine and carbamoyl phosphate: step 3/3. The sequence is that of Argininosuccinate lyase from Staphylococcus aureus (strain bovine RF122 / ET3-1).